The chain runs to 537 residues: O-phosphoserine--tRNA(Cys) ligase (537 aa).

Substrate-binding positions include 186-188 (HMT), 231-233 (SAS), 273-274 (YY), and Asn-317.

This sequence belongs to the class-II aminoacyl-tRNA synthetase family. O-phosphoseryl-tRNA(Cys) synthetase subfamily. As to quaternary structure, homotetramer. Interacts with SepCysS.

The catalysed reaction is tRNA(Cys) + O-phospho-L-serine + ATP = O-phospho-L-seryl-tRNA(Cys) + AMP + diphosphate. Catalyzes the attachment of O-phosphoserine (Sep) to tRNA(Cys). This is O-phosphoserine--tRNA(Cys) ligase from Methanococcus vannielii (strain ATCC 35089 / DSM 1224 / JCM 13029 / OCM 148 / SB).